The primary structure comprises 394 residues: 2-oxoglutarate and iron-dependent oxygenase domain-containing protein CP2 (394 aa).

The disordered stretch occupies residues 1–35 (MSSEQREGSQETTTTTVEGNGTIAGQNSHSAAPTT). Residues 17-35 (VEGNGTIAGQNSHSAAPTT) are compositionally biased toward polar residues. Residues 248–347 (DSHHGFVVEY…RVNMLLWCRS (100 aa)) enclose the Fe2OG dioxygenase domain. Positions 268, 270, and 328 each coordinate Fe cation. Arg-338 contributes to the 2-oxoglutarate binding site.

It depends on Fe(2+) as a cofactor. Requires L-ascorbate as cofactor. As to expression, expressed in roots, cotyledons, rosette leaves, cauline leaves, inflorescences and siliques.

The protein resides in the nucleus. Its subcellular location is the nucleoplasm. Functionally, participates in the epigenetic repression of flowering genes in association with ICU11. Functions in the repression of several members of the MADS-box transcription factors family, including SEP3, during vegetative development via histone modification. In Arabidopsis thaliana (Mouse-ear cress), this protein is 2-oxoglutarate and iron-dependent oxygenase domain-containing protein CP2.